The following is a 132-amino-acid chain: Small ribosomal subunit protein uS8 (132 aa).

It belongs to the universal ribosomal protein uS8 family. Part of the 30S ribosomal subunit. Contacts proteins S5 and S12.

In terms of biological role, one of the primary rRNA binding proteins, it binds directly to 16S rRNA central domain where it helps coordinate assembly of the platform of the 30S subunit. This chain is Small ribosomal subunit protein uS8, found in Corynebacterium jeikeium (strain K411).